The following is a 294-amino-acid chain: MARPPASLGSQAPDRDRGEANVVTRVSQWADNHLRLVQNISTGMAIAGIMLLIRSVRLTSKFTTSSDIPVEFIRKKVKLRGRLQRITECGLEIEHIPITLPFISSWKEEPRGVLLVKLAGVELTESGKVWLQAELKPSQLLWFQLLGKEDSALFCYLLVNKGGYFNVNLNEEILRRGLGKTVLVKGLNYDSKTHWKIHRNLLKAELTALKKGEGIWKEESEKESYFRKLKDSWRERWTKDNDLKPAGADLGSTKDSYHDSRRRASGKGKDSVSNYSFFLKLREFVSRLHFWRKG.

Ala2 is subject to N-acetylalanine. Residues 36–53 form a helical membrane-spanning segment; the sequence is LVQNISTGMAIAGIMLLI. The tract at residues 244–271 is disordered; it reads KPAGADLGSTKDSYHDSRRRASGKGKDS.

The protein localises to the membrane. May play a role in transcription regulation. The chain is Protein C3orf33 homolog from Mus musculus (Mouse).